A 197-amino-acid polypeptide reads, in one-letter code: Imidazoleglycerol-phosphate dehydratase (197 aa).

This sequence belongs to the imidazoleglycerol-phosphate dehydratase family.

Its subcellular location is the cytoplasm. It carries out the reaction D-erythro-1-(imidazol-4-yl)glycerol 3-phosphate = 3-(imidazol-4-yl)-2-oxopropyl phosphate + H2O. It functions in the pathway amino-acid biosynthesis; L-histidine biosynthesis; L-histidine from 5-phospho-alpha-D-ribose 1-diphosphate: step 6/9. The polypeptide is Imidazoleglycerol-phosphate dehydratase (Rhodopseudomonas palustris (strain HaA2)).